Consider the following 193-residue polypeptide: Ion-translocating oxidoreductase complex subunit A (193 aa).

Transmembrane regions (helical) follow at residues 5–25 (LLLF…FLGL), 47–67 (FVMT…LVPL), 72–92 (LRTL…EMVV), 102–122 (LLGI…VALL), 134–154 (AVYG…FAAI), and 171–191 (SIAL…TGLV).

This sequence belongs to the NqrDE/RnfAE family. In terms of assembly, the complex is composed of six subunits: RnfA, RnfB, RnfC, RnfD, RnfE and RnfG.

The protein resides in the cell inner membrane. Its function is as follows. Part of a membrane-bound complex that couples electron transfer with translocation of ions across the membrane. In Serratia proteamaculans (strain 568), this protein is Ion-translocating oxidoreductase complex subunit A.